Here is a 146-residue protein sequence, read N- to C-terminus: Leghemoglobin Lb120-34 (146 aa).

Residues 2 to 146 (GFTEKQEALV…LASAIKKAMN (145 aa)) form the Globin domain. Nitrated tyrosine occurs at positions 24 and 29. S44 is a heme b binding site. S44 carries the post-translational modification Phosphoserine. Position 61 (H61) interacts with O2. Heme b-binding residues include K64, H93, and K96. Nitrated tyrosine is present on Y134.

Belongs to the plant globin family. Monomer. Post-translationally, nitrated in effective nodules and particularly in hypoxic conditions; this mechanism may play a protective role in the symbiosis by buffering toxic peroxynitrite NO(2)(-). Nitration level decrease during nodule senescence. Phosphorylation at Ser-44 disrupts the molecular environment of its porphyrin ring oxygen binding pocket, thus leading to a reduced oxygen consumption and to the delivery of oxygen O(2) to symbiosomes. Root nodules.

It is found in the cytoplasm. The protein localises to the cytosol. It localises to the nucleus. Leghemoglobin that reversibly binds oxygen O(2) through a pentacoordinated heme iron. In root nodules, facilitates the diffusion of oxygen to the bacteroids while preventing the bacterial nitrogenase from being inactivated by buffering dioxygen, nitric oxide and carbon monoxide, and promoting the formation of reactive oxygen species (ROS, e.g. H(2)O(2)). This role is essential for symbiotic nitrogen fixation (SNF). In Pisum sativum (Garden pea), this protein is Leghemoglobin Lb120-34.